A 290-amino-acid polypeptide reads, in one-letter code: Hydroxyacylglutathione hydrolase-like protein (290 aa).

Zn(2+) contacts are provided by H54, H56, D58, H59, H110, D134, and H172.

The protein belongs to the metallo-beta-lactamase superfamily. Glyoxalase II family. Zn(2+) serves as cofactor.

Hydrolase acting on ester bonds. This is Hydroxyacylglutathione hydrolase-like protein (HAGHL) from Homo sapiens (Human).